A 366-amino-acid polypeptide reads, in one-letter code: UDP-N-acetylglucosamine--N-acetylmuramyl-(pentapeptide) pyrophosphoryl-undecaprenol N-acetylglucosamine transferase (366 aa).

UDP-N-acetyl-alpha-D-glucosamine is bound by residues 15–17 (TGG), asparagine 127, arginine 175, serine 201, isoleucine 255, and glutamine 300.

This sequence belongs to the glycosyltransferase 28 family. MurG subfamily.

The protein localises to the cell inner membrane. It carries out the reaction di-trans,octa-cis-undecaprenyl diphospho-N-acetyl-alpha-D-muramoyl-L-alanyl-D-glutamyl-meso-2,6-diaminopimeloyl-D-alanyl-D-alanine + UDP-N-acetyl-alpha-D-glucosamine = di-trans,octa-cis-undecaprenyl diphospho-[N-acetyl-alpha-D-glucosaminyl-(1-&gt;4)]-N-acetyl-alpha-D-muramoyl-L-alanyl-D-glutamyl-meso-2,6-diaminopimeloyl-D-alanyl-D-alanine + UDP + H(+). It participates in cell wall biogenesis; peptidoglycan biosynthesis. Its function is as follows. Cell wall formation. Catalyzes the transfer of a GlcNAc subunit on undecaprenyl-pyrophosphoryl-MurNAc-pentapeptide (lipid intermediate I) to form undecaprenyl-pyrophosphoryl-MurNAc-(pentapeptide)GlcNAc (lipid intermediate II). The polypeptide is UDP-N-acetylglucosamine--N-acetylmuramyl-(pentapeptide) pyrophosphoryl-undecaprenol N-acetylglucosamine transferase (Thiobacillus denitrificans (strain ATCC 25259 / T1)).